Consider the following 706-residue polypeptide: Ribosomal RNA large subunit methyltransferase K/L (706 aa).

A THUMP domain is found at 43–154; sequence LMYQSLLWSR…RDMASVALDL (112 aa).

Belongs to the methyltransferase superfamily. RlmKL family.

The protein resides in the cytoplasm. The catalysed reaction is guanosine(2445) in 23S rRNA + S-adenosyl-L-methionine = N(2)-methylguanosine(2445) in 23S rRNA + S-adenosyl-L-homocysteine + H(+). It catalyses the reaction guanosine(2069) in 23S rRNA + S-adenosyl-L-methionine = N(2)-methylguanosine(2069) in 23S rRNA + S-adenosyl-L-homocysteine + H(+). Specifically methylates the guanine in position 2445 (m2G2445) and the guanine in position 2069 (m7G2069) of 23S rRNA. The protein is Ribosomal RNA large subunit methyltransferase K/L of Yersinia pestis (strain Pestoides F).